The following is a 66-amino-acid chain: MKAEDIRTKTQDQLTDDLASLKKEQFNLRFQKATGQLEKTARVRQVRKDIARIKTIAAEKSAAKKA.

This sequence belongs to the universal ribosomal protein uL29 family.

The protein is Large ribosomal subunit protein uL29 of Mesorhizobium japonicum (strain LMG 29417 / CECT 9101 / MAFF 303099) (Mesorhizobium loti (strain MAFF 303099)).